The chain runs to 764 residues: Oxysterol-binding protein-related protein 10 (764 aa).

The interval 1–74 (MERAVQGTDG…PSGGGGRRRE (74 aa)) is disordered. Low complexity-rich tracts occupy residues 15 to 47 (NSSSRSSSRATSAGSSPSCSLAGRGVSSRSAAA) and 55 to 65 (RSSPGSVAASP). Phosphoserine is present on residues serine 29 and serine 30. Omega-N-methylarginine is present on arginine 38. Phosphoserine occurs at positions 57, 60, and 64. One can recognise a PH domain in the interval 74–171 (EPALEGVLSK…WVTQLRACAK (98 aa)). Threonine 196 is modified (phosphothreonine). Phosphoserine occurs at positions 201, 209, and 223. Disordered stretches follow at residues 304–335 (GQPSQKPGASENILGWHGSKSHSTEQLKNGTL) and 354–391 (AEDEQTSQPEPEPNSGSELVLSEDEKSDNEDKEETELG). The segment covering 359–370 (TSQPEPEPNSGS) has biased composition (polar residues). The segment covering 374–389 (LSEDEKSDNEDKEETE) has biased composition (acidic residues). A 1,2-diacyl-sn-glycero-3-phospho-(1D-myo-inositol 4-phosphate) contacts are provided by residues 413 to 418 (LTKVVL) and 477 to 480 (KPYN). A 1,2-diacyl-sn-glycero-3-phospho-L-serine is bound by residues 413–418 (LTKVVL) and asparagine 480. The tract at residues 501–520 (KRTASRSPASCHEHPMADDP) is disordered. Residues 511-520 (CHEHPMADDP) show a composition bias toward basic and acidic residues. 535 to 536 (HH) is an a 1,2-diacyl-sn-glycero-3-phospho-(1D-myo-inositol 4-phosphate) binding site. A 1,2-diacyl-sn-glycero-3-phospho-L-serine is bound at residue serine 561. A coiled-coil region spans residues 713–740 (DIDAATEQKRHLEEKQRVEERKRENLRT). A 1,2-diacyl-sn-glycero-3-phospho-(1D-myo-inositol 4-phosphate) is bound by residues lysine 721, glutamate 725, and arginine 729.

This sequence belongs to the OSBP family. In terms of assembly, interacts with OSBPL9. Interacts with DIAPH1.

The protein localises to the cytoplasm. The protein resides in the cytoskeleton. Probable lipid transporter involved in lipid countertransport between the endoplasmic reticulum and the plasma membrane. Its ability to bind phosphatidylserine, suggests that it specifically exchanges phosphatidylserine with phosphatidylinositol 4-phosphate (PI4P), delivering phosphatidylserine to the plasma membrane in exchange for PI4P. Plays a role in negative regulation of lipid biosynthesis. Negatively regulates APOB secretion from hepatocytes. Binds cholesterol and acidic phospholipids. Also binds 25-hydroxycholesterol. Binds phosphatidylserine. The polypeptide is Oxysterol-binding protein-related protein 10 (OSBPL10) (Homo sapiens (Human)).